Here is a 345-residue protein sequence, read N- to C-terminus: D(2) dopamine receptor B (345 aa).

The Extracellular portion of the chain corresponds to 1-10; that stretch reads EWRFSRIHCD. Cys9 and Cys84 are joined by a disulfide. A helical transmembrane segment spans residues 11 to 32; that stretch reads IFVTLDVMMCTASILNLCAISI. Residues 33–53 lie on the Cytoplasmic side of the membrane; that stretch reads DRYTAVAMPMLYNTRYSSKRR. Residues 54-74 form a helical membrane-spanning segment; the sequence is VTVMISVVWVLSFAISCPLLF. Residues 75–90 lie on the Extracellular side of the membrane; it reads GLNNTASTVCIIDNPA. Asn77 carries an N-linked (GlcNAc...) asparagine glycan. The chain crosses the membrane as a helical span at residues 91 to 115; it reads FVIYSSIVSFYVPFIVTLLVYVQIY. The Cytoplasmic portion of the chain corresponds to 116–275; the sequence is IVLRKRRKRV…SQHKEKKATQ (160 aa). Residues 166–177 are compositionally biased toward basic and acidic residues; the sequence is KKKVEAGNHPED. A disordered region spans residues 166–199; sequence KKKVEAGNHPEDMEMEMMSSTSPPEKTKHKSASP. Residues 276–297 traverse the membrane as a helical segment; the sequence is MLAIVLGVFIICWLPFFITHIL. At 298-311 the chain is on the extracellular side; the sequence is NMHCNCNIPQALYS. Residues Cys301 and Cys303 are joined by a disulfide bond. A helical membrane pass occupies residues 312-333; it reads AFTWLGYVNSAVNPIIYTTFNV. Residues 334 to 345 lie on the Cytoplasmic side of the membrane; that stretch reads EFRKAFIKILHC. Cys345 carries the S-palmitoyl cysteine lipid modification.

This sequence belongs to the G-protein coupled receptor 1 family. Post-translationally, palmitoylated. Palmitoylation is probably required for proper localization to the plasma membrane and stability of the receptor. Brain; pituitary.

It is found in the cell membrane. It localises to the golgi apparatus membrane. This is one of the five types (D1 to D5) of receptors for dopamine. The activity of this receptor is mediated by G proteins which inhibits adenylyl cyclase. In Xenopus D2R is involved in the regulation of the melanotrope cells of the intermediate pituitary during background adaptation of the animal. This chain is D(2) dopamine receptor B (drd2-b), found in Xenopus laevis (African clawed frog).